The chain runs to 72 residues: MKPSGLTFAFLVVFMMAIMYNSVQVTADADADAEAEALANALAEAGILMYQGLGEKSDGLDQGQNGKVVAKK.

A signal peptide spans 1–27 (MKPSGLTFAFLVVFMMAIMYNSVQVTA). Positions 28-45 (DADADAEAEALANALAEA) are excised as a propeptide.

This sequence belongs to the formicidae venom precursor-01 superfamily. As to expression, expressed by the venom gland.

It localises to the secreted. Its function is as follows. Peptide with unknown function that does not resemble any other pilosulin-like peptide and appears to have a coiled coil structure. The chain is U-poneritoxin(01)-Om7a from Odontomachus monticola (Trap-jaw ant).